An 88-amino-acid chain; its full sequence is UPF0250 protein IL0958 (88 aa).

This sequence belongs to the UPF0250 family.

The chain is UPF0250 protein IL0958 from Idiomarina loihiensis (strain ATCC BAA-735 / DSM 15497 / L2-TR).